Here is a 94-residue protein sequence, read N- to C-terminus: RxLR effector protein PITG_15972 (94 aa).

The N-terminal stretch at 1–21 (MRAVYILAMACAATLQASSSA) is a signal peptide. Residues 50–65 (RLLRVEDKEEETEEER) carry the RxLR-dEER motif.

This sequence belongs to the RxLR effector family.

Its subcellular location is the secreted. The protein resides in the host cytoplasm. It is found in the host nucleus. Functionally, effector that enhances P.infestans colonization of Nicotiana benthamiana leaves. The protein is RxLR effector protein PITG_15972 of Phytophthora infestans (strain T30-4) (Potato late blight agent).